The chain runs to 213 residues: MVQLRFCVLGSIAGSVLRASATWTCVAGRAGRKGAGWECGGARSFSSAAVTMAPIKVGDTIPSVEVFEGEPGKKVNLAELFKDKKGVLFGVPGAFTPGCSKTHLPGFVEQAGALKAKGAQVVACLSVNDAFVTAEWGRAHQAEGKVQLLADPTGAFGKETDLLLDDSLVSLFGNRRLKRFSMVIDKGVVKALNVEPDGTGLTCSLAPNILSQL.

Residues 1–51 (MVQLRFCVLGSIAGSVLRASATWTCVAGRAGRKGAGWECGGARSFSSAAVT) constitute a mitochondrion transit peptide. The Thioredoxin domain maps to 55–213 (IKVGDTIPSV…SLAPNILSQL (159 aa)). An N6-acetyllysine modification is found at K74. Residue K82 is modified to N6-acetyllysine; alternate. Position 82 is an N6-succinyllysine; alternate (K82). C99 serves as the catalytic Cysteine sulfenic acid (-SOH) intermediate. Residue C99 is the site of S-palmitoyl cysteine attachment. The cysteines at positions 99 and 203 are disulfide-linked. K115 bears the N6-succinyllysine mark. 2 positions are modified to phosphoserine: S170 and S181. Residues 211–213 (SQL) carry the Microbody targeting signal motif.

Belongs to the peroxiredoxin family. Prx5 subfamily. As to quaternary structure, monomer. In terms of processing, S-palmitoylated. Palmitoylation occurs on the active site, inhibiting its reactivity; therefore PRDX5 palmitoylation status determines its antioxidant capacity. S-palmitoylated. Depalmitoylated by ABHD10.

Its subcellular location is the mitochondrion. It is found in the cytoplasm. The protein resides in the peroxisome matrix. The catalysed reaction is a hydroperoxide + [thioredoxin]-dithiol = an alcohol + [thioredoxin]-disulfide + H2O. In terms of biological role, thiol-specific peroxidase that catalyzes the reduction of hydrogen peroxide and organic hydroperoxides to water and alcohols, respectively. Plays a role in cell protection against oxidative stress by detoxifying peroxides and as sensor of hydrogen peroxide-mediated signaling events. This chain is Peroxiredoxin-5, mitochondrial, found in Rattus norvegicus (Rat).